Here is a 114-residue protein sequence, read N- to C-terminus: Protein ORF3 (114 aa).

2 hydrophobic regions span residues 6 to 22 (CALG…CLCC) and 33 to 53 (AVVG…GLIL). The interval 28-68 (VSRLAAVVGGAAAVPAVVSGVTGLILSPSQSPIFIQPTPSP) is interaction with host HPX. The segment at 48–72 (VTGLILSPSQSPIFIQPTPSPPMSP) is interaction with the capsid protein. Residue Ser71 is modified to Phosphoserine; by host. The interval 72-114 (PLRPGLDLVFANPPDHSAPLGVTRPSAPPLPHVVDLPQLGPRR) is homodimerization, and interaction with host AMBP/bikunin. The segment at 91 to 114 (LGVTRPSAPPLPHVVDLPQLGPRR) is disordered. The interval 95-104 (RPSAPPLPHV) is interaction with host SRC, HCK, FYN, PIK3R3 and GRB2. A PTAP/PSAP motif motif is present at residues 96–99 (PSAP).

It belongs to the hepevirus ORF3 protein family. In terms of assembly, forms homooligomers. Interacts with host SRC, HCK, FYN, PIK3R3 and GRB2 (via SH3 domain); binding does not activate the kinases. Interacts with host AMBP/bikunin and AMBP/alpha-1-microglobulin peptides. Interacts with host HPX/hemopexin. Interacts (when phosphorylated) with capsid protein ORF2. Interacts with host TSG101; this interaction plays a role in viral release from the host cell. Interacts with host SIRPA; this interaction down-regulates the phosphorylation of host IRF3. Palmitoylated in the N-terminus.

It is found in the host endoplasmic reticulum membrane. The protein resides in the host cytoplasm. The protein localises to the host cytoskeleton. Its subcellular location is the virion. It localises to the host cell membrane. Small multifunctional phosphoprotein involved in virion morphogenesis, egress and counteracting host innate immunity. Plays critical roles in the final steps of viral release by interacting with host TSG101, a member of the vacuolar protein-sorting pathway and using other cellular host proteins involved in vesicle formation pathway. Also acts as a viroporin and forms ion conductive pores allowing viral particle release. Impairs the generation of type I interferon by down-regulating host TLR3 and TLR7 as well as their downstream signaling pathways. Down-regulates the phosphorylation of host IRF3 via the interaction with host SIRP-alpha, thereby inhibiting IFN-I expression. Interacts with host microtubules. This is Protein ORF3 from Hepatitis E virus genotype 1 (isolate Human/Burma) (HEV-1).